Here is a 378-residue protein sequence, read N- to C-terminus: METIAKHLDVCQEQLLELYEENSNNLTKHIQHWKCIRYECVLLHKAKQMGLNHIGMQVVPALTVSQTKGHQAIEMQMTLETLLNSDYGMEPWTLQDTSREMWLTAPKYCFKKQGQTVEVKYDCNADNIMEYVSWKYIYVHDTDKWVKVTGHIDYKGLYYVHGGHKTYYTNFEKEAKKYGNSLQWEVCIGSSVICSPASISSTVQDVSIAGPASHTSSSTTTTLAQASPALPTCTSEERVDPPPCKRPRGPTTNTNNARDTVSVRHSDSVDSTNNNIYPNSYNSNKGRDNNFCTATPVVQLQGDPNCLKCLRYRLHAKHKTLFVAASSTWRWTCSDTSSKHALVTLTYVNEEQREQFLNTVRLPPTVTYKVGYMSLQLL.

The interval M1–S200 is transactivation domain. Over residues A209 to T232 the composition is skewed to low complexity. Positions A209–N282 are disordered. A compositionally biased stretch (polar residues) spans P250–D259. Residues N273–N282 show a composition bias toward low complexity. Residues T295–L378 form a DNA-binding domain region.

The protein belongs to the papillomaviridae E2 protein family. In terms of assembly, binds DNA as homodimer. Interacts with protein E1; this interaction greatly increases E1 DNA-binding activity. Interacts with protein L1; this interaction enhances E2-dependent replication and transcription activation. Interacts with protein L2; this interaction inhibits E2 transcriptional activity but not DNA replication function E2. Interacts with protein E7; this interaction inhibits E7 oncogenic activity. Interacts with host TAF1; this interaction modulates E2-dependent transcriptional regulation. Interacts with host BRD4; this interaction mediates E2 transcriptional activation function. Additionally, the interaction with host BRD4 on mitotic chromosomes mediates tethering of the viral genome. Interacts with host TOPBP1; this interaction is required for optimal viral DNA replication. In terms of processing, phosphorylated.

It is found in the host nucleus. Plays a role in the initiation of viral DNA replication. A dimer of E2 interacts with a dimer of E1 in order to improve specificity of E1 DNA binding activity. Once the complex recognizes and binds DNA at specific sites, the E2 dimer is removed from DNA. E2 also regulates viral transcription through binding to the E2RE response element (5'-ACCNNNNNNGGT-3') present in multiple copies in the regulatory regions of the viral genome. Activates or represses transcription depending on E2RE's position with regards to proximal promoter elements including the TATA-box. Repression occurs by sterically hindering the assembly of the transcription initiation complex. The polypeptide is Regulatory protein E2 (Human papillomavirus type 55).